Reading from the N-terminus, the 57-residue chain is MAVPFRRTSKMKKRLRRTHFKLQVPGMVACPECGEMKISHRVCKSCGTYKGKDVKSN.

It belongs to the bacterial ribosomal protein bL32 family.

The protein is Large ribosomal subunit protein bL32 of Bacillus pumilus (strain SAFR-032).